The sequence spans 251 residues: MSTSVAENKALSASGDVNASDASVPPELLTRHPLQNRWALWYLKADRNKEWEDCLKMVSLFDTVEDFWSLYNHIQSAGGLNWGSDYYLFKEGIKPMWEDVNNVQGGRWLVVVDKQKLQRRTQLLDHYWLELLMAIVGEQFDEYGDYICGAVVNVRQKGDKVSLWTRDATRDDVNLRIGQVLKQKLSIPDTEILRYEVHKDSSARTSSTVKPRICLPAKDPAPVKEKGPAATTSPSNPGTEATGTSPATPTP.

The tract at residues 200–251 is disordered; the sequence is DSSARTSSTVKPRICLPAKDPAPVKEKGPAATTSPSNPGTEATGTSPATPTP. The segment covering 230-251 has biased composition (polar residues); the sequence is ATTSPSNPGTEATGTSPATPTP.

This sequence belongs to the eukaryotic initiation factor 4E family. In terms of assembly, eIF4F is a multi-subunit complex, the composition of which varies with external and internal environmental conditions. It is composed of at least eIF4A, eIF4E and eIF4G. eIF4E is also known to interact with other partners. Interacts with mxt. Component of the pid-1 variant of the PETISCO complex (also called the pid-3, erh-2, tofu-6, and ife-3 small RNA complex) containing at least pid-1, tofu-6, ife-3, pid-3, and erh-2, which is required for the biogenesis of a class of 21 nucleotide PIWI-interacting RNAs (piRNAs) that possess a uracil residue at the 5'-end (also called 21U-RNAs). Component of the tost-1 variant of the PETISCO complex (also called the pid-3, erh-2, tofu-6, and ife-3 small RNA complex) containing at least tost-1, tofu-6, ife-3, pid-3, and erh-2, which plays an essential role in embryogenesis. Within the pid-1 and tost-1 variants of the PETISCO complexes interacts with tofu-6 (via C-terminus). In contrast to the pid-1 variant of the PETISCO complex, the tost-1 variant of the PETISCO complex plays a minor role in the biogenesis of 21U-RNAs. Highly expressed in the germline (at protein level).

It localises to the cytoplasmic granule. The protein localises to the cytoplasm. It is found in the perinuclear region. Its function is as follows. Recognizes and binds the 7-methylguanosine-containing mRNA cap during an early step in the initiation of protein synthesis and facilitates ribosome binding by inducing the unwinding of the mRNAs secondary structures. All 5 eIF4E proteins bind monomethyl cap structures. Only ife-1, ife-2 and ife-5 bind trimethyl cap structures which result from trans-splicing. Translation of trimethyl cap structure mRNAs may be regulated by intracellular redox state; disulfide bonds change the width and depth of the cap-binding cavity determining selectivity to mRNA caps. Ife-3 is essential for viability. Component of the pid-1 and tost-1 variants of the PETISCO complexes, which have roles in the biogenesis of a class of 21 nucleotide PIWI-interacting RNAs (piRNAs) that possess a uracil residue at the 5'-end (also called 21U-RNAs) and embryogenesis, respectively. Within the pid-1 variant of the PETISCO complex binds to capped 21U-RNA precursor molecules, possibly playing a role in the processing of the 5' end of the molecules to promote binding of other complex components such as pid-3. However, it is not essential for the biogenesis of 21U-RNAs by itself. Within the tost-1 variant of the PETISCO complex binds to splice leader SL1 RNA fragments to possibly play a role in their processing. The sequence is that of Eukaryotic translation initiation factor 4E-3 from Caenorhabditis elegans.